The following is a 93-amino-acid chain: Small ribosomal subunit protein uS17 (93 aa).

Belongs to the universal ribosomal protein uS17 family. Part of the 30S ribosomal subunit.

Functionally, one of the primary rRNA binding proteins, it binds specifically to the 5'-end of 16S ribosomal RNA. In Rhodococcus jostii (strain RHA1), this protein is Small ribosomal subunit protein uS17.